Here is a 456-residue protein sequence, read N- to C-terminus: tRNA modification GTPase MnmE (456 aa).

The (6S)-5-formyl-5,6,7,8-tetrahydrofolate site is built by R24, E81, and K120. Residues G216–G379 form the TrmE-type G domain. Position 226 (N226) interacts with K(+). GTP contacts are provided by residues N226–S231, T245–T251, D270–G273, N335–D338, and S359–R361. S230 is a Mg(2+) binding site. The K(+) site is built by T245, I247, and T250. T251 contacts Mg(2+). K456 is a binding site for (6S)-5-formyl-5,6,7,8-tetrahydrofolate.

It belongs to the TRAFAC class TrmE-Era-EngA-EngB-Septin-like GTPase superfamily. TrmE GTPase family. In terms of assembly, homodimer. Heterotetramer of two MnmE and two MnmG subunits. K(+) is required as a cofactor.

Its subcellular location is the cytoplasm. Functionally, exhibits a very high intrinsic GTPase hydrolysis rate. Involved in the addition of a carboxymethylaminomethyl (cmnm) group at the wobble position (U34) of certain tRNAs, forming tRNA-cmnm(5)s(2)U34. The polypeptide is tRNA modification GTPase MnmE (Pseudomonas syringae pv. tomato (strain ATCC BAA-871 / DC3000)).